The chain runs to 175 residues: Shikimate kinase (175 aa).

14–19 (GAGKST) provides a ligand contact to ATP. S18 serves as a coordination point for Mg(2+). 3 residues coordinate substrate: D36, R60, and G82. R120 serves as a coordination point for ATP. R140 is a binding site for substrate. Q157 provides a ligand contact to ATP.

The protein belongs to the shikimate kinase family. In terms of assembly, monomer. Requires Mg(2+) as cofactor.

It is found in the cytoplasm. It catalyses the reaction shikimate + ATP = 3-phosphoshikimate + ADP + H(+). It participates in metabolic intermediate biosynthesis; chorismate biosynthesis; chorismate from D-erythrose 4-phosphate and phosphoenolpyruvate: step 5/7. Catalyzes the specific phosphorylation of the 3-hydroxyl group of shikimic acid using ATP as a cosubstrate. The protein is Shikimate kinase of Actinobacillus succinogenes (strain ATCC 55618 / DSM 22257 / CCUG 43843 / 130Z).